The primary structure comprises 90 residues: Sec-independent protein translocase protein TatA (90 aa).

A helical transmembrane segment spans residues 2-22 (GVGGISIWQLLIVLVIILLLF). Basic and acidic residues-rich tracts occupy residues 45–68 (LRDE…HKAE) and 76–90 (ADAD…DEHK). The tract at residues 45–90 (LRDEERRDAEEAATIEHKQAHKAENPSQRQQADADFKIKSGNDEHK) is disordered.

Belongs to the TatA/E family. In terms of assembly, the Tat system comprises two distinct complexes: a TatABC complex, containing multiple copies of TatA, TatB and TatC subunits, and a separate TatA complex, containing only TatA subunits. Substrates initially bind to the TatABC complex, which probably triggers association of the separate TatA complex to form the active translocon.

Its subcellular location is the cell inner membrane. Part of the twin-arginine translocation (Tat) system that transports large folded proteins containing a characteristic twin-arginine motif in their signal peptide across membranes. TatA could form the protein-conducting channel of the Tat system. The chain is Sec-independent protein translocase protein TatA from Nitrosococcus oceani (strain ATCC 19707 / BCRC 17464 / JCM 30415 / NCIMB 11848 / C-107).